The chain runs to 1079 residues: Intraflagellar transport protein 80 (1079 aa).

The segment at 495–514 (GDMIRPSTVQNQPSTQGLPN) is disordered. Residues 501–514 (STVQNQPSTQGLPN) show a composition bias toward polar residues.

The protein localises to the cell projection. The protein resides in the cilium. Its subcellular location is the flagellum. It is found in the cytoplasm. It localises to the cytoskeleton. The protein localises to the flagellum axoneme. The protein resides in the flagellum basal body. Component of the intraflagellar transport complex B (IFT-B) involved in flagellar assembly. This is Intraflagellar transport protein 80 from Giardia intestinalis (strain ATCC 50803 / WB clone C6) (Giardia lamblia).